A 511-amino-acid polypeptide reads, in one-letter code: 2,3-bisphosphoglycerate-independent phosphoglycerate mutase (511 aa).

Mn(2+) contacts are provided by D14 and S64. S64 (phosphoserine intermediate) is an active-site residue. Substrate-binding positions include H125, R155–D156, R187, R193, R259–R262, and K333. Mn(2+) is bound by residues D400, H404, D441, H442, and H460.

Belongs to the BPG-independent phosphoglycerate mutase family. As to quaternary structure, monomer. It depends on Mn(2+) as a cofactor.

The catalysed reaction is (2R)-2-phosphoglycerate = (2R)-3-phosphoglycerate. Its pathway is carbohydrate degradation; glycolysis; pyruvate from D-glyceraldehyde 3-phosphate: step 3/5. In terms of biological role, catalyzes the interconversion of 2-phosphoglycerate and 3-phosphoglycerate. This Pseudoalteromonas atlantica (strain T6c / ATCC BAA-1087) protein is 2,3-bisphosphoglycerate-independent phosphoglycerate mutase.